The sequence spans 203 residues: Small ribosomal subunit protein uS4 (203 aa).

The 61-residue stretch at 93-153 folds into the S4 RNA-binding domain; sequence RRFDNVVFRA…QKSQNLDAVA (61 aa).

Belongs to the universal ribosomal protein uS4 family. In terms of assembly, part of the 30S ribosomal subunit. Contacts protein S5. The interaction surface between S4 and S5 is involved in control of translational fidelity.

One of the primary rRNA binding proteins, it binds directly to 16S rRNA where it nucleates assembly of the body of the 30S subunit. In terms of biological role, with S5 and S12 plays an important role in translational accuracy. In Chlorobium phaeobacteroides (strain BS1), this protein is Small ribosomal subunit protein uS4.